Reading from the N-terminus, the 119-residue chain is Holo-[acyl-carrier-protein] synthase (119 aa).

The Mg(2+) site is built by aspartate 8 and glutamate 58.

It belongs to the P-Pant transferase superfamily. AcpS family. Requires Mg(2+) as cofactor.

It localises to the cytoplasm. It carries out the reaction apo-[ACP] + CoA = holo-[ACP] + adenosine 3',5'-bisphosphate + H(+). Functionally, transfers the 4'-phosphopantetheine moiety from coenzyme A to a Ser of acyl-carrier-protein. The protein is Holo-[acyl-carrier-protein] synthase of Oceanobacillus iheyensis (strain DSM 14371 / CIP 107618 / JCM 11309 / KCTC 3954 / HTE831).